The primary structure comprises 729 residues: Cellulose synthase catalytic subunit [UDP-forming] (729 aa).

The next 3 membrane-spanning stretches (helical) occupy residues 30 to 50 (LATWALWLLGALLLVFVVAVP), 110 to 130 (FILGLGLLGAELYAFVILVLG), and 171 to 191 (TTVLAASVIDWPAGKITIHLL). Residues 151-244 (LWPSVDVFIP…YVAIFDCDHI (94 aa)) form a catalytic subdomain A region. D193 is a catalytic residue. Residues D240 and D242 each contribute to the substrate site. Residues 321 to 381 (TALEEVGGVA…AQRIRWARGM (61 aa)) are catalytic subdomain B. Residue D337 is part of the active site. Helical transmembrane passes span 405–425 (LNAMLHFFYGVPRIIYLTAPL), 427–447 (YLFFGAHVIQASALMILAYAL), 520–540 (LFLLLLNVVGMVAGVLRLIYV), 549–569 (IWFNLAWTLYNMVLLGATIAT), and 610–630 (MAIMLAQPQPIEPGLPVQIGL). In terms of domain architecture, PilZ spans 575–671 (QVRSAHRVPL…QERWLVASTF (97 aa)).

This sequence belongs to the glycosyltransferase 2 family. Mg(2+) serves as cofactor.

It localises to the cell inner membrane. It catalyses the reaction [(1-&gt;4)-beta-D-glucosyl](n) + UDP-alpha-D-glucose = [(1-&gt;4)-beta-D-glucosyl](n+1) + UDP + H(+). Its pathway is glycan metabolism; bacterial cellulose biosynthesis. Its activity is regulated as follows. Activated by bis-(3'-5') cyclic diguanylic acid (c-di-GMP). Its function is as follows. Catalytic subunit of cellulose synthase. It polymerizes uridine 5'-diphosphate glucose to cellulose, which is produced as an extracellular component for mechanical and chemical protection. This is Cellulose synthase catalytic subunit [UDP-forming] (bcsA) from Xanthomonas axonopodis pv. citri (strain 306).